The primary structure comprises 237 residues: tRNA (guanine-N(7)-)-methyltransferase (237 aa).

Residues aspartate 35, glutamate 60, asparagine 87, and aspartate 113 each contribute to the S-adenosyl-L-methionine site. Residue aspartate 113 is part of the active site. Residues lysine 117 and aspartate 149 each coordinate substrate.

The protein belongs to the class I-like SAM-binding methyltransferase superfamily. TrmB family.

The catalysed reaction is guanosine(46) in tRNA + S-adenosyl-L-methionine = N(7)-methylguanosine(46) in tRNA + S-adenosyl-L-homocysteine. Its pathway is tRNA modification; N(7)-methylguanine-tRNA biosynthesis. Catalyzes the formation of N(7)-methylguanine at position 46 (m7G46) in tRNA. This is tRNA (guanine-N(7)-)-methyltransferase from Synechococcus sp. (strain WH7803).